The sequence spans 76 residues: UPF0346 protein OEOE_1017 (76 aa).

Belongs to the UPF0346 family.

This Oenococcus oeni (strain ATCC BAA-331 / PSU-1) protein is UPF0346 protein OEOE_1017.